Consider the following 624-residue polypeptide: Aeromonas extracellular serine protease (624 aa).

The N-terminal stretch at 1-24 (MKQTSLALAITALLSTLPSALVQA) is a signal peptide. Cys28 and Cys48 are oxidised to a cystine. Asn53 is a binding site for Ca(2+). A Peptidase S8 domain is found at 59–421 (QWYLLNSGQD…GKVRDVKGLE (363 aa)). The active-site Charge relay system is the Asp102. Asp111 lines the Ca(2+) pocket. The interval 116-140 (VRPGSKNVVTGSDDPTPTDPDTAHG) is disordered. His139 (charge relay system) is an active-site residue. Positions 150, 152, 154, 156, 321, 322, 324, 327, 330, and 350 each coordinate Ca(2+). A disulfide bridge connects residues Cys325 and Cys350. Catalysis depends on Ser360, which acts as the Charge relay system. Positions 456 to 622 (LPPLVQLPWQ…SLRVLGHDAN (167 aa)) constitute a P/Homo B domain. Asp478, Asp512, Asp577, Ala579, Asn602, and Asn603 together coordinate Ca(2+).

Belongs to the peptidase S8 family. Furin subfamily. In terms of assembly, forms a complex with the chaperone ORF2 in the periplasm. After translocation of the ASP-ORF2 complex from the periplasm to the extracellular space, the complex is dissociated in a pH-dependent manner. It depends on Ca(2+) as a cofactor.

Its subcellular location is the periplasm. The protein localises to the secreted. It catalyses the reaction Cleavage of -Lys-Lys-|-Xaa and -Lys-Arg-|-Xaa bonds.. Folding, maturation and production of the active form of the protease by the cell requires a protein (ORF2), encoded just downstream of asp, which acts as a chaperone. Formation of a complex with ORF2 in the periplasm also inactivates the protease activity and likely protects ASP from intrinsic proteases. In vitro, protease activity is inhibited by human alpha-2-macroglobulin, suggesting that this inhibitor can impede ASP virulence activities in A.sobria infection sites. However, slow ASP inhibition by alpha-2-macroglobulin in plasma may indicate insufficient ASP control in vivo. Activity is inhibited by serine protease inhibitors such as 4-(2-aminoethyl)-benzenesulfonyl fluoride (AEBSF) and diisopropyl fluorophosphate (DFP). Not inhibited by metallo-protease inhibitors and cysteine protease inhibitors. The treatment with reagents to modify sulfhydryl group do not reduce the activity. Exhibits serine protease activity. Preferentially cleaves the peptide bond following two basic residues, one of which is Lys, but does not recognize the bond following a single basic residue. Probable potent virulence factor that cleaves various host plasma proteins, including prekallikrein, prothrombin and fibrinogen. ASP induces vascular leakage and reduction in blood pressure by activating the host plasma kallikrein/kinin system. It affects the host coagulation system during infection through activation of prothrombin to alpha-thrombin and degradation of fibrinogen, which impairs plasma clottability. It also hydrolyzes the complement component C5, releasing the C5a anaphylatoxin, which causes the formation of pus and edema. In addition, degrades its external chaperone ORF2 after the secretion of the ASP-ORF2 complex. The polypeptide is Aeromonas extracellular serine protease (Aeromonas sobria).